The following is a 282-amino-acid chain: Pantothenate synthetase (282 aa).

30 to 37 (MGYFHEGH) is an ATP binding site. The active-site Proton donor is the His37. Residue Gln61 coordinates (R)-pantoate. Residue Gln61 participates in beta-alanine binding. ATP is bound at residue 147 to 150 (GQKD). Gln153 contacts (R)-pantoate. ATP is bound by residues Val176 and 184 to 187 (LSSR).

This sequence belongs to the pantothenate synthetase family. As to quaternary structure, homodimer.

It is found in the cytoplasm. It carries out the reaction (R)-pantoate + beta-alanine + ATP = (R)-pantothenate + AMP + diphosphate + H(+). It functions in the pathway cofactor biosynthesis; (R)-pantothenate biosynthesis; (R)-pantothenate from (R)-pantoate and beta-alanine: step 1/1. Functionally, catalyzes the condensation of pantoate with beta-alanine in an ATP-dependent reaction via a pantoyl-adenylate intermediate. The protein is Pantothenate synthetase of Maridesulfovibrio salexigens (strain ATCC 14822 / DSM 2638 / NCIMB 8403 / VKM B-1763) (Desulfovibrio salexigens).